The chain runs to 378 residues: uncharacterized protein (378 aa).

Belongs to the mimivirus L17x/L18x family.

This is an uncharacterized protein from Acanthamoeba polyphaga (Amoeba).